The sequence spans 399 residues: Probable tRNA sulfurtransferase (399 aa).

The THUMP domain maps to 60–165; sequence YAVMERLKRV…TEGTYISCET (106 aa). Residues 183 to 184, 208 to 209, Arg265, Gly287, and Gln296 each bind ATP; these read LL and HF.

The protein belongs to the ThiI family.

It is found in the cytoplasm. It carries out the reaction [ThiI sulfur-carrier protein]-S-sulfanyl-L-cysteine + a uridine in tRNA + 2 reduced [2Fe-2S]-[ferredoxin] + ATP + H(+) = [ThiI sulfur-carrier protein]-L-cysteine + a 4-thiouridine in tRNA + 2 oxidized [2Fe-2S]-[ferredoxin] + AMP + diphosphate. It catalyses the reaction [ThiS sulfur-carrier protein]-C-terminal Gly-Gly-AMP + S-sulfanyl-L-cysteinyl-[cysteine desulfurase] + AH2 = [ThiS sulfur-carrier protein]-C-terminal-Gly-aminoethanethioate + L-cysteinyl-[cysteine desulfurase] + A + AMP + 2 H(+). It participates in cofactor biosynthesis; thiamine diphosphate biosynthesis. Catalyzes the ATP-dependent transfer of a sulfur to tRNA to produce 4-thiouridine in position 8 of tRNAs, which functions as a near-UV photosensor. Also catalyzes the transfer of sulfur to the sulfur carrier protein ThiS, forming ThiS-thiocarboxylate. This is a step in the synthesis of thiazole, in the thiamine biosynthesis pathway. The sulfur is donated as persulfide by IscS. The polypeptide is Probable tRNA sulfurtransferase (Brevibacillus brevis (strain 47 / JCM 6285 / NBRC 100599)).